Consider the following 599-residue polypeptide: THO complex subunit 1 (599 aa).

Disordered regions lie at residues 376-395 (EKQP…RRQR) and 497-599 (KYQA…MPVS). The segment covering 502-522 (PNEKAKRAKKEETKGGSHETE) has biased composition (basic and acidic residues). Over residues 575 to 585 (QIEDGETEEAG) the composition is skewed to acidic residues.

As to quaternary structure, component of the THO complex, which is composed of THO1, THO2, THO3, THO5, THO6 and THO7.

It localises to the nucleus. Acts as a component of the THO subcomplex of the TREX complex which is thought to couple mRNA transcription, processing and nuclear export. Contributes to the integrity of the endogenous trans-acting small interfering RNA (ta-siRNA) pathway. May process or transport a long RNA molecule so that it can be a template for secondary siRNA production. May participate in the trafficking of siRNA precursors to the ARGONAUTE catalytic center. Required for the generation of functional messenger ribonucleoproteins (mRNPs). Plays an important roles in plant innate immunity. The chain is THO complex subunit 1 (THO1) from Arabidopsis thaliana (Mouse-ear cress).